The following is a 116-amino-acid chain: Putative membrane protein insertion efficiency factor (116 aa).

The protein belongs to the UPF0161 family.

The protein resides in the cell inner membrane. Functionally, could be involved in insertion of integral membrane proteins into the membrane. In Bartonella tribocorum (strain CIP 105476 / IBS 506), this protein is Putative membrane protein insertion efficiency factor.